The following is an 83-amino-acid chain: Toxin BmKBT (83 aa).

Positions 1–19 (MKAALLLVIFSLMLIGVLT) are cleaved as a signal peptide. Residues 21–81 (KSGYPTDHEG…TWSRATNKCR (61 aa)) form the LCN-type CS-alpha/beta domain. 4 cysteine pairs are disulfide-bonded: C31–C80, C35–C54, C41–C61, and C45–C63. Position 83 (K83) is a propeptide, removed by a carboxypeptidase.

It belongs to the long (4 C-C) scorpion toxin superfamily. Sodium channel inhibitor family. Beta subfamily. Expressed by the venom gland.

The protein resides in the secreted. In terms of biological role, this toxin increases the peak sodium current, slows down the inactivation of sodium channels (Nav), and prolongs the action potential of dorsal root ganglion neurons, which indicates that it behaves as a classical alpha-toxin. It binds to mammal brain and insect sodium channels, but with a different manner. This peptide may bind to a distinct receptor site on mammal brain sodium channels, which is unconnected with that for BmKAS (a beta-toxin), BmKIT2 (a beta-toxin) or BmK I (an alpha toxin). In contrast, the receptor site for BmKabT on insect sodium channels might be closely related to that for the beta-insect depressant toxin BmKIT2. Possesses potent toxicity in mice but induces only paralysis in cotton bollworm. The polypeptide is Toxin BmKBT (Olivierus martensii (Manchurian scorpion)).